A 170-amino-acid chain; its full sequence is Glycine cleavage system H protein, mitochondrial (170 aa).

A mitochondrion-targeting transit peptide spans 1 to 47 (MLRTTRLWTTRMPTVSKLFLRNSSGNALNKNKLPFLYSSQGPQAVRY). The region spanning 61-143 (TAFVGITKYA…MGDGWLVKMK (83 aa)) is the Lipoyl-binding domain. An N6-lipoyllysine modification is found at Lys-102.

It belongs to the GcvH family. In terms of assembly, component of the glycine decarboxylase complex (GDC), which is composed of four proteins: P, T, L and H. Requires (R)-lipoate as cofactor.

It localises to the mitochondrion. Functionally, the glycine cleavage system (glycine decarboxylase complex) catalyzes the degradation of glycine. The H protein shuttles the methylamine group of glycine from the P protein to the T protein. This chain is Glycine cleavage system H protein, mitochondrial (GCV3), found in Saccharomyces cerevisiae (strain ATCC 204508 / S288c) (Baker's yeast).